Consider the following 485-residue polypeptide: MGAVMLQGTGSDVGKSVLVAGLCRAFVRRGLAVRPFKPQNMSNNAAVTIDGGEIGRAQALQAIACRVEPHSDMNPVLLKPQADRTSQLVVHGRVRGTLGSADFREARRPLLDEVLASYRRLREQCDIVVVEGAGSPAEINLRAGDIANMGFARAAGVPVVLVGDIDRGGVIAAVVGTRAVLDPADAAMIHGFLINKFRGDPALFEDGYRQIEALSGWRGFGVVPWLAATARLPSEDAVILERRGGPAEGRVLVACPILPRISNFDDLDPLKLEPGVELVMVPPGRPIPAEAALIVLPGSKATIADLAALRAEGWDIDIRAHHRRGRAILGLCGGYQMLGRRVADPEGIEGPPGAVDGLGLLDVETRLSPAKTLRRVEGEALDARFDGYEMHVGETDGPGRARPFARFDDGRTDGAIDPGGTVMGSYVHGLLANADLRRALLARLGIEGGGRDYAASVDAALDAIAEEIERHVDVDALVALAQAGG.

Residues 250-436 (RVLVACPILP…VHGLLANADL (187 aa)) enclose the GATase cobBQ-type domain. Cys332 functions as the Nucleophile in the catalytic mechanism. His428 is a catalytic residue.

This sequence belongs to the CobB/CobQ family. CobQ subfamily.

The protein operates within cofactor biosynthesis; adenosylcobalamin biosynthesis. Catalyzes amidations at positions B, D, E, and G on adenosylcobyrinic A,C-diamide. NH(2) groups are provided by glutamine, and one molecule of ATP is hydrogenolyzed for each amidation. The protein is Cobyric acid synthase of Rhizorhabdus wittichii (strain DSM 6014 / CCUG 31198 / JCM 15750 / NBRC 105917 / EY 4224 / RW1) (Sphingomonas wittichii).